Consider the following 349-residue polypeptide: 4-hydroxythreonine-4-phosphate dehydrogenase (349 aa).

Substrate is bound by residues His141 and Thr142. A divalent metal cation contacts are provided by His176, His221, and His276. Substrate-binding residues include Lys284, Asn293, and Arg302.

It belongs to the PdxA family. As to quaternary structure, homodimer. The cofactor is Zn(2+). Mg(2+) is required as a cofactor. Requires Co(2+) as cofactor.

It localises to the cytoplasm. The enzyme catalyses 4-(phosphooxy)-L-threonine + NAD(+) = 3-amino-2-oxopropyl phosphate + CO2 + NADH. It participates in cofactor biosynthesis; pyridoxine 5'-phosphate biosynthesis; pyridoxine 5'-phosphate from D-erythrose 4-phosphate: step 4/5. Functionally, catalyzes the NAD(P)-dependent oxidation of 4-(phosphooxy)-L-threonine (HTP) into 2-amino-3-oxo-4-(phosphooxy)butyric acid which spontaneously decarboxylates to form 3-amino-2-oxopropyl phosphate (AHAP). This chain is 4-hydroxythreonine-4-phosphate dehydrogenase, found in Methylorubrum extorquens (strain CM4 / NCIMB 13688) (Methylobacterium extorquens).